The following is a 65-amino-acid chain: Large ribosomal subunit protein bL35 (65 aa).

It belongs to the bacterial ribosomal protein bL35 family.

The protein is Large ribosomal subunit protein bL35 of Proteus mirabilis (strain HI4320).